A 321-amino-acid polypeptide reads, in one-letter code: MPELAVQKVVVHPLVLLSVVDHFNRIGKVGNQKRVVGVLLGSWQKKVLDVSNSFAVPFDEDDKDDSVWFLDHDYLENMYGMFKKVNARERIVGWYHTGPKLHKNDIAINELMKRYCPNSVLVIIDVKPKDLGLPTEAYISVEEVHDDGTPTSKTFEHVTSEIGAEEAEEVGVEHLLRDIKDTTVGTLSQRITNQVHGLKGLNSKLLDIRSYLEKVASGKLPINHQIIYQLQDVFNLLPDASLQEFVKAFYLKTNDQMVVVYLASLIRSVVALHNLINNKIANRDAEKKEGQEKEESKKERKDDKEKEKSDAAKKEEKKEKK.

One can recognise an MPN domain in the interval 9 to 144 (VVVHPLVLLS…TEAYISVEEV (136 aa)). Lysine 180 is covalently cross-linked (Glycyl lysine isopeptide (Lys-Gly) (interchain with G-Cter in ubiquitin)). N6-acetyllysine occurs at positions 204, 214, 313, and 314. The tract at residues 281-321 (ANRDAEKKEGQEKEESKKERKDDKEKEKSDAAKKEEKKEKK) is disordered.

Belongs to the peptidase M67A family. As to quaternary structure, component of the 19S proteasome regulatory particle complex. The 26S proteasome consists of a 20S core particle (CP) and two 19S regulatory subunits (RP). The regulatory particle is made of a lid composed of 9 subunits including PSMD7, a base containing 6 ATPases and few additional components. Within the complex, PSMD7 interacts with subunit PSMD4 through their respective MPN domain. Interacts with TRIM5.

Component of the 26S proteasome, a multiprotein complex involved in the ATP-dependent degradation of ubiquitinated proteins. This complex plays a key role in the maintenance of protein homeostasis by removing misfolded or damaged proteins, which could impair cellular functions, and by removing proteins whose functions are no longer required. Therefore, the proteasome participates in numerous cellular processes, including cell cycle progression, apoptosis, or DNA damage repair. In Mus musculus (Mouse), this protein is 26S proteasome non-ATPase regulatory subunit 7 (Psmd7).